Reading from the N-terminus, the 302-residue chain is tRNA dimethylallyltransferase (302 aa).

ATP is bound at residue 8–15 (GSSGSGKS). 10 to 15 (SGSGKS) is a binding site for substrate. The interval 33–36 (DSLS) is interaction with substrate tRNA.

The protein belongs to the IPP transferase family. In terms of assembly, monomer. Mg(2+) serves as cofactor.

The enzyme catalyses adenosine(37) in tRNA + dimethylallyl diphosphate = N(6)-dimethylallyladenosine(37) in tRNA + diphosphate. Functionally, catalyzes the transfer of a dimethylallyl group onto the adenine at position 37 in tRNAs that read codons beginning with uridine, leading to the formation of N6-(dimethylallyl)adenosine (i(6)A). The chain is tRNA dimethylallyltransferase from Helicobacter hepaticus (strain ATCC 51449 / 3B1).